The following is a 490-amino-acid chain: MTATETVRVRFCPSPTGTPHVGLVRTALFNWAYARHTGGTFVFRIEDTDAQRDSEESYLALLDALRWLGLDWDEGPEVGGPYGPYRQSQRAEIYRDVLARLLAAGEAYHAFSTPEEVEARHVAAGRNPKLGYDNFDRHLTDAQRAAYLAEGRQPVVRLRMPDDDLAWNDLVRGPVTFAAGSVPDFALTRASGDPLYTLVNPCDDALMKITHVLRGEDLLPSTPRQLALHQALIRIGVAERIPKFAHLPTVLGEGTKKLSKRDPQSNLFAHRDRGFIPEGLLNYLALLGWSIADDHDLFGLDEMVAAFDVADVNSSPARFDQKKADALNAEHIRMLDVGDFTVRLRDHLDTHGHHIALDEAAFAAAAELVQTRIVVLGDAWELLKFFNDDQYVIDPKAAAKELGPDGAAVLDAALAALTSATDWTAPLIEAALKDALIEGLALKPRKAFSPIRVAATGTTVSPPLFESLELLGRDRSMQRLRAARQLVGHA.

The 'HIGH' region signature appears at 13-23 (PSPTGTPHVGL). A 'KMSKS' region motif is present at residues 257–261 (KLSKR). Lysine 260 contacts ATP.

It belongs to the class-I aminoacyl-tRNA synthetase family. Glutamate--tRNA ligase type 1 subfamily. In terms of assembly, monomer.

It is found in the cytoplasm. It catalyses the reaction tRNA(Glu) + L-glutamate + ATP = L-glutamyl-tRNA(Glu) + AMP + diphosphate. Its function is as follows. Catalyzes the attachment of glutamate to tRNA(Glu) in a two-step reaction: glutamate is first activated by ATP to form Glu-AMP and then transferred to the acceptor end of tRNA(Glu). The polypeptide is Glutamate--tRNA ligase (Mycobacterium bovis (strain BCG / Pasteur 1173P2)).